A 250-amino-acid chain; its full sequence is MPLDLNSDLGEGFGSWTMGDDAAMLDLVTSANIACGFHAGDPSIMRRTCALAAERGVRIGAHVGHRDLVGFGRRRIEIDPADLRDEVLYQIGALDGFARAAGSRVSYVKPHGALYHSAAARRDLADAVLAAMTDLDPKLVLLGPAGTELEHAATAAGVRFIGEGFADRAYTPEGRLAPRGRAGAVLDADAAVAQAVAIATEGRARVVEGGTVEVGAGSVCVHGDTPAAVEMARRIRDALAAAGVVVEAFV.

Belongs to the LamB/PxpA family. Forms a complex composed of PxpA, PxpB and PxpC.

It catalyses the reaction 5-oxo-L-proline + ATP + 2 H2O = L-glutamate + ADP + phosphate + H(+). In terms of biological role, catalyzes the cleavage of 5-oxoproline to form L-glutamate coupled to the hydrolysis of ATP to ADP and inorganic phosphate. The sequence is that of 5-oxoprolinase subunit A from Nocardia farcinica (strain IFM 10152).